Here is a 217-residue protein sequence, read N- to C-terminus: Ran-binding protein 1 homolog b (217 aa).

Disordered stretches follow at residues Met1–Pro32 and Glu160–Ala217. Ala2 is modified (N-acetylalanine). The span at Asp14–Thr26 shows a compositional bias: acidic residues. In terms of domain architecture, RanBD1 spans Gln29–Glu164. A compositionally biased stretch (basic and acidic residues) spans Leu181–Ala217.

As to quaternary structure, interacts with the GTP-bound form of RAN1, RAN2 and RAN3.

The protein localises to the nucleus. It is found in the nuclear pore complex. In Arabidopsis thaliana (Mouse-ear cress), this protein is Ran-binding protein 1 homolog b (RANBP1B).